The primary structure comprises 273 residues: Terpene cyclase ascF (273 aa).

The next 7 membrane-spanning stretches (helical) occupy residues 18-38 (VYEA…ILIA), 49-69 (MPLF…LWVV), 78-98 (MTIW…HGVL), 113-133 (ILVG…SWWI), 153-173 (YWAV…MLCV), 178-198 (GGVS…GLNM), and 217-237 (APAV…GFVL).

It belongs to the paxB family.

It localises to the membrane. The enzyme catalyses ilicicolin A epoxide = ilicicolin C. It functions in the pathway secondary metabolite biosynthesis; terpenoid biosynthesis. Its function is as follows. Terpene cyclase; part of the asc-1 gene cluster that mediates the biosynthesis of both ascochlorin and ascofuranone, a strong inhibitor of cyanide-insensitive alternative oxidases and a promising drug candidate against African trypanosomiasis. The first step in the pathway is performed by the non-reducing polyketide synthase ascC that produces orsellinic acid by condensing acetyl-CoA with 3 malonyl-CoA units. Orsellinic acid is then prenylated by the prenyltransferase ascA to yield ilicicolinic acid B. Ilicicolinic acid B is further reduced to ilicicolin B by the reductase ascB. The halogenase ascD then chlorinates ilicicolin B to produce ilicicolin A which is converted to ilicicolin A epoxide by the cytochrome P450 monooxygenase ascE that catalyzes stereoselective epoxidation of the terminal double bond of the prenyl group. Ilicicolin A epoxide is the last common precursor for the biosynthesis of ascofuranone and ascochlorin. The terpene cyclase ascF produces a monocyclic terpene, and the cyclization reaction is proposed to be initiated by protonation of the terminal epoxide of ilicicolin A epoxide to generate a monocyclic tertiarycation, which is followed by a series of hydride and methyl shifts with abstraction of proton, leading to the formation of the (14S,15R,19R)-trimethylcyclohexanone ring structure of ilicicolin C, which is finally reduced to ascochlorin by the dehydrogenase ascG. On the other hand, ilicicolin A epoxide is hydroxylated by the cytochrome P450 monooxygenase ascH, and the resultant product is cyclized by the terpene cyclase ascI to ascofuranol via protonation-initiated epoxide ring opening, which facilitates the 6-endo-tet cyclization to form the tetrahy-drofuran ring. Finally, ascofuranol is oxidized into ascofuranone by ascJ. In Acremonium egyptiacum (Oospora egyptiaca), this protein is Terpene cyclase ascF.